We begin with the raw amino-acid sequence, 1447 residues long: MIDPSSSEEEGEDDAVPNVSSKGRLTNTTKGTSAVSIIGGSAGSVVGSNIPVSGSNTDLIGNQRQSNISSICNRNDVGNISVAALGSTSNKIEQICGNRADTGNLEVPSNGIPSGISQETLNQSVGSSRANSLPRPLSPSPSLTSEKHETAEPHGKHEREEEERKRRIQLYVFISRCISYPFNAKQPTDMTKRQTKISKQQLEIITQRFQAFLKGETQIMADEAFQNAVQSYHDVFLKSERVLKMVQSGASSQHDFREVFRNNIEKRVRSLPEIDGLSKETVLTSWMAKFDIILKGTGEEDSKRPSRMQQSLNSELILSKEQLYDMFQQILLVKKFEHQILFNALMLDSADEQAAAIRRELDGRMQRVGEMEKNRKLMPKFVLKEMESLYVEELKSSINLLMANLESLPVSKGNMDSKYGLQKLKRYNHSTPSFLKLILRSHGSLSKLEGDSEDGSTQLTKLDVVLTFQLEVIVMEVENGEKLQTDQAEASKPMWDTQGDFTTTHPLPVVKVKLYTENPGMLALEDKELGKVTLKPTPLSSKSPEWHRMIVPKNLPDQDIRIKIACRLDKPLNMKHCGYLYAIGKSVWKKWKRRYFVLVQVSQYTFAMCSYKEKKSEPSEMMQLDGYTVDYIEAASANLMFGIDLNGGRYFFNAVREGDSISFACDDENECSLWVMAMYRATGQSHKPTPPITQDKNSAMSKIQGDADKARKHGMEDFISTDPCTFDHATLFKTLQNLTLEYRLNDPYASLGWFSPGQVFVLDEYCARYGVRGCYRHLCYLSDLLDRAEKQHMIDPTLIHYSFAFCASHVHGNRPDGVGSITHEEKEKFSEIKERLRQLLEFQITNFRYCFPFGRPEGALKATLSLLERVLMKDIVTPVPPEEVRQMIKKSLETAALVNYTRLSNKAKIDEDLRGDVIVPAPKKLEDLIHLAELCVDLLQQNEEHYGEAFAWFSDLLVEHAEIFWSLFAVDMDRVLSEQAPDTWDSFPLFQILNDYLRTDDNLRNGRFHQHLRDTFAPLVVRYVDLMESSIAQSIHKGFEKERWESKGINAALNPAALNNAAQALNTAALNPSMILCGKKDQVNFYVPKLPKQSNSTAANDEMRNGCATSEDLFWKLDALQSFIRDLHWPDAEFRQHLEQRLKMMAVDMIEQCIQRTDSSFQSWLKKNIAFISTDYILPSEMCAMVNVILDAKNQSFKLTTIDGIDLYKFHAKIDDQIDKANVAMTQGLSGKLMSVLESTLSKLARYDEGSLIGSILSFTNVSSSGKDLGQGYVNFFRNNMDQVRGKIADDLWTLHFFEQWYSQQINMLCNWLSERVDHALHYAQVASISHIIKKIYSDFELQGVLEDKLNSKAYQAVAQRMATEEATCALTMPDACEDEPCDEIREGEEEDNGDESTSNIPRGLPKPKVAAAQAAAVTNVVAGRVGNLLGKGIGGLSSKLGSGSWF.

A compositionally biased stretch (acidic residues) spans 1–15 (MIDPSSSEEEGEDDA). Disordered stretches follow at residues 1-35 (MIDP…TSAV) and 101-163 (DTGN…EEEE). Composition is skewed to polar residues over residues 18–32 (NVSS…TKGT) and 111–126 (GIPS…QSVG). A compositionally biased stretch (low complexity) spans 127–144 (SSRANSLPRPLSPSPSLT). Positions 145–163 (SEKHETAEPHGKHEREEEE) are enriched in basic and acidic residues. Residues 417 to 547 (SKYGLQKLKR…PLSSKSPEWH (131 aa)) enclose the C2 domain. One can recognise a PH domain in the interval 573–683 (NMKHCGYLYA…WVMAMYRATG (111 aa)). The 188-residue stretch at 970-1157 (VDMDRVLSEQ…DMIEQCIQRT (188 aa)) folds into the MHD1 domain. Residues 1386-1395 (REGEEEDNGD) show a composition bias toward acidic residues. The tract at residues 1386 to 1406 (REGEEEDNGDESTSNIPRGLP) is disordered.

As to expression, restricted to the nervous system at all stages of development and highly localized at synapses (at protein level).

Its subcellular location is the cytoplasmic vesicle membrane. The protein resides in the synapse. In terms of biological role, calcium-binding protein involved in exocytosis of vesicles filled with neurotransmitters and neuropeptides. May specifically mediate the Ca(2+)-dependent exocytosis of large dense-core vesicles (DCVs) and other dense-core vesicles. However, it probably also participates in small clear synaptic vesicles (SVs) exocytosis and it is unclear whether its function is related to Ca(2+) triggering. This is Calcium-dependent secretion activator from Drosophila melanogaster (Fruit fly).